Reading from the N-terminus, the 373-residue chain is MTDNSKTRVVVGMSGGVDSSVTALLLKEQGYDVIGVFMKNWDDTDEFGVCTATEDYKDVAAVADQIGIPYYSVNFEKEYWDRVFEYFLAEYRAGRTPNPDVMCNKEIKFKAFLDYAMTLGADYVATGHYAQVSRDADGTVHMLRGADNNKDQTYFLSQLSQEQLQKVMFPLGHLQKPRVREIAEKAGLVTAKKKDSTGICFIGEKNFKEFLSSYLPAQKGRMMTIDGRDMGEHNGLMYYTIGQRGGMGIGGQKGGDNAPWFVVGKDLSQNILYVGQGFYHDALMSTSLTASQVHFTQNMPDKFTLNCTAKFRYRQPDSKVDVKVNGDKAEVIFDEPQRAITPGQAVVFYDGDECLGGGLIDNAYQEEKICQYI.

ATP contacts are provided by residues 12-19 (GMSGGVDS) and methionine 38. The interval 98 to 100 (NPD) is interaction with target base in tRNA. Cysteine 103 functions as the Nucleophile in the catalytic mechanism. Residues cysteine 103 and cysteine 200 are joined by a disulfide bond. Glycine 127 contacts ATP. Residues 150–152 (KDQ) are interaction with tRNA. The active-site Cysteine persulfide intermediate is the cysteine 200. Residues 312-313 (RY) are interaction with tRNA.

The protein belongs to the MnmA/TRMU family.

Its subcellular location is the cytoplasm. It carries out the reaction S-sulfanyl-L-cysteinyl-[protein] + uridine(34) in tRNA + AH2 + ATP = 2-thiouridine(34) in tRNA + L-cysteinyl-[protein] + A + AMP + diphosphate + H(+). In terms of biological role, catalyzes the 2-thiolation of uridine at the wobble position (U34) of tRNA, leading to the formation of s(2)U34. In Streptococcus mutans serotype c (strain ATCC 700610 / UA159), this protein is tRNA-specific 2-thiouridylase MnmA.